The sequence spans 641 residues: Probable potassium transport system protein Kup 4 (641 aa).

12 helical membrane-spanning segments follow: residues 31–51 (AALGALGIVYGDLGTSPLYTL), 64–84 (TASALGILSLLVWTLIITISI), 119–139 (ILAVMGLLGAALLYGDGVITP), 155–175 (GSLKPFVMPAAVAILIVFFAA), 183–203 (IGAAFGPIMLLWFLVIAVLGL), 221–241 (AIGFLAHSGGNGMLVLGGVFL), 265–285 (WYAIVLPSLLLSYAGQTALLI), 298–318 (LCPTWGVYPLVFLAMIATIIA), 355–375 (IYVPVVNWMMMVATIGITIAF), 381–401 (LAGAYGTAVSTTMLLTTCLLF), 412–432 (LAVSILIAGLFLIVDVGFFGA), and 437–457 (IAEGGWLPLTFGALVFFLMLT).

This sequence belongs to the HAK/KUP transporter (TC 2.A.72) family.

It is found in the cell inner membrane. It catalyses the reaction K(+)(in) + H(+)(in) = K(+)(out) + H(+)(out). Transport of potassium into the cell. Likely operates as a K(+):H(+) symporter. This Bradyrhizobium sp. (strain BTAi1 / ATCC BAA-1182) protein is Probable potassium transport system protein Kup 4.